Here is a 297-residue protein sequence, read N- to C-terminus: Large ribosomal subunit protein uL18 (297 aa).

Residue glycine 2 is modified to N-acetylglycine. 2 positions are modified to N6-acetyllysine: lysine 5 and lysine 48. Residue serine 185 is modified to Phosphoserine. At lysine 220 the chain carries N6-acetyllysine; alternate. Lysine 220 is covalently cross-linked (Glycyl lysine isopeptide (Lys-Gly) (interchain with G-Cter in SUMO1); alternate). Lysine 220 participates in a covalent cross-link: Glycyl lysine isopeptide (Lys-Gly) (interchain with G-Cter in SUMO2); alternate. Threonine 232 carries the phosphothreonine modification. The tract at residues 253 to 297 (YEKKPKKEVKKKRWNRPKMSLAQKKDRVAQKKASFLRAQERAAES) is disordered. Residues 258 to 268 (KKEVKKKRWNR) are compositionally biased toward basic residues. A Phosphoserine modification is found at serine 272.

This sequence belongs to the universal ribosomal protein uL18 family. In terms of assembly, component of the large ribosomal subunit (LSU). Part of the 5S RNP complex, which is a LSU subcomplex composed of the 5S RNA, RPL5 and RPL11. Component of a hexameric 5S RNP precursor complex, composed of 5S RNA, RRS1, RPF2/BXDC1, RPL5, RPL11 and HEATR3; this complex acts as a precursor for ribosome assembly. Interacts with isoform 1 of NVL in an ATP-dependent manner. Interacts with RRP1B. Interacts with IPO5, IPO7 and KPNB1; these interactions may be involved in RPL5 nuclear import for the assembly of ribosomal subunits.

The protein localises to the cytoplasm. It is found in the nucleus. Its subcellular location is the nucleolus. Its function is as follows. Component of the ribosome, a large ribonucleoprotein complex responsible for the synthesis of proteins in the cell. The small ribosomal subunit (SSU) binds messenger RNAs (mRNAs) and translates the encoded message by selecting cognate aminoacyl-transfer RNA (tRNA) molecules. The large subunit (LSU) contains the ribosomal catalytic site termed the peptidyl transferase center (PTC), which catalyzes the formation of peptide bonds, thereby polymerizing the amino acids delivered by tRNAs into a polypeptide chain. The nascent polypeptides leave the ribosome through a tunnel in the LSU and interact with protein factors that function in enzymatic processing, targeting, and the membrane insertion of nascent chains at the exit of the ribosomal tunnel. As part of the 5S RNP/5S ribonucleoprotein particle it is an essential component of the LSU, required for its formation and the maturation of rRNAs. It also couples ribosome biogenesis to p53/TP53 activation. As part of the 5S RNP it accumulates in the nucleoplasm and inhibits MDM2, when ribosome biogenesis is perturbed, mediating the stabilization and the activation of TP53. This Homo sapiens (Human) protein is Large ribosomal subunit protein uL18 (RPL5).